A 275-amino-acid chain; its full sequence is Light-independent protochlorophyllide reductase iron-sulfur ATP-binding protein (275 aa).

ATP contacts are provided by residues Gly12–Thr17 and Lys41. Ser16 contacts Mg(2+). Residues Cys97 and Cys131 each coordinate [4Fe-4S] cluster. Asn182 to Arg183 contributes to the ATP binding site.

Belongs to the NifH/BchL/ChlL family. As to quaternary structure, homodimer. Protochlorophyllide reductase is composed of three subunits; BchL, BchN and BchB. It depends on [4Fe-4S] cluster as a cofactor.

The catalysed reaction is chlorophyllide a + oxidized 2[4Fe-4S]-[ferredoxin] + 2 ADP + 2 phosphate = protochlorophyllide a + reduced 2[4Fe-4S]-[ferredoxin] + 2 ATP + 2 H2O. Its pathway is porphyrin-containing compound metabolism; bacteriochlorophyll biosynthesis (light-independent). In terms of biological role, component of the dark-operative protochlorophyllide reductase (DPOR) that uses Mg-ATP and reduced ferredoxin to reduce ring D of protochlorophyllide (Pchlide) to form chlorophyllide a (Chlide). This reaction is light-independent. The L component serves as a unique electron donor to the NB-component of the complex, and binds Mg-ATP. The chain is Light-independent protochlorophyllide reductase iron-sulfur ATP-binding protein from Chlorobium phaeobacteroides (strain DSM 266 / SMG 266 / 2430).